A 620-amino-acid chain; its full sequence is Tyrosine-protein kinase ITK/TSK (620 aa).

In terms of domain architecture, PH spans 4-111; the sequence is FILLEEQLIK…WVLALKEETR (108 aa). A Btk-type zinc finger spans residues 113-149; that stretch reads NNSLVPKYHPNFWMDGKWRCCSQLEKLATGCAQYDPT. His121, Cys132, Cys133, and Cys143 together coordinate Zn(2+). An SH3 domain is found at 171–231; that stretch reads PEETVVIALY…PSSYLVEKSP (61 aa). Tyr180 carries the post-translational modification Phosphotyrosine; by autocatalysis. Residues 239-338 enclose the SH2 domain; that stretch reads WYNKSISRDK…GLVTRLRYPV (100 aa). Positions 363 to 615 constitute a Protein kinase domain; it reads LTFVQEIGSG…SRLLRQLAEI (253 aa). ATP-binding positions include 369-377 and Lys391; that span reads IGSGQFGLV. The Proton acceptor role is filled by Asp482. Position 512 is a phosphotyrosine; by LCK (Tyr512). A Phosphoserine modification is found at Ser565.

This sequence belongs to the protein kinase superfamily. Tyr protein kinase family. TEC subfamily. In terms of assembly, homooligomerizes; this association negatively regulates kinase activity. Interacts with PPIA/CYPA; this interaction regulates TCR signal strength via a proline-directed conformational switch in ITK. Interacts with THEMIS. Interacts with FASLG. Interacts with VAV1; this interaction is important for VAV1 localization and TCR-induced actin polarization. Interacts with TBX21. Zn(2+) is required as a cofactor. Phosphorylated at Tyr-512 in the activation loop of the kinase domain by LCK. Subsequent autophosphorylation at Tyr-180 leads to the kinase activation. The autophosphorylated Tyr-180 lies within the substrate binding sequence of the SH3 domain. Post-translationally, ubiquitinated. In terms of tissue distribution, T-cell lines and natural killer cell lines.

The protein resides in the cytoplasm. It is found in the nucleus. It catalyses the reaction L-tyrosyl-[protein] + ATP = O-phospho-L-tyrosyl-[protein] + ADP + H(+). Functionally, tyrosine kinase that plays an essential role in regulation of the adaptive immune response. Regulates the development, function and differentiation of conventional T-cells and nonconventional NKT-cells. When antigen presenting cells (APC) activate T-cell receptor (TCR), a series of phosphorylation lead to the recruitment of ITK to the cell membrane, in the vicinity of the stimulated TCR receptor, where it is phosphorylated by LCK. Phosphorylation leads to ITK autophosphorylation and full activation. Once activated, phosphorylates PLCG1, leading to the activation of this lipase and subsequent cleavage of its substrates. In turn, the endoplasmic reticulum releases calcium in the cytoplasm and the nuclear activator of activated T-cells (NFAT) translocates into the nucleus to perform its transcriptional duty. Phosphorylates 2 essential adapter proteins: the linker for activation of T-cells/LAT protein and LCP2. Then, a large number of signaling molecules such as VAV1 are recruited and ultimately lead to lymphokine production, T-cell proliferation and differentiation. Required for TCR-mediated calcium response in gamma-delta T-cells, may also be involved in the modulation of the transcriptomic signature in the Vgamma2-positive subset of immature gamma-delta T-cells. Phosphorylates TBX21 at 'Tyr-530' and mediates its interaction with GATA3. The sequence is that of Tyrosine-protein kinase ITK/TSK (ITK) from Homo sapiens (Human).